Reading from the N-terminus, the 468-residue chain is Ammonium transporter Amt2 (468 aa).

The next 12 membrane-spanning stretches (helical) occupy residues 1-21 (MVGR…TAGA), 39-59 (FVWA…FAML), 77-97 (LMDF…LMMG), 123-143 (LWFF…GSIA), 156-176 (AVVS…GGWL), 194-214 (FAGS…AVML), 236-256 (LAFA…FNAG), 268-288 (IIAS…MAIT), 297-317 (VGMT…PCAW), 321-341 (WSSV…YWWL), 350-370 (VGAI…LGIF), and 400-420 (LISA…LFWI).

It belongs to the ammonia transporter channel (TC 1.A.11.2) family. Homotrimer.

The protein localises to the cell membrane. Its function is as follows. Involved in the uptake of ammonium/ammonia (NH(4)(+)/NH(3)). Transport is electrogenic. The polypeptide is Ammonium transporter Amt2 (Archaeoglobus fulgidus (strain ATCC 49558 / DSM 4304 / JCM 9628 / NBRC 100126 / VC-16)).